We begin with the raw amino-acid sequence, 512 residues long: Activin receptor type-2B (512 aa).

A signal peptide spans 1–18; that stretch reads MTAPWVALALLWGSLCAG. At 19 to 137 the chain is on the extracellular side; it reads SGRGEAETRE…PPPTAPTLLT (119 aa). Cystine bridges form between Cys29–Cys59, Cys49–Cys77, Cys84–Cys103, Cys90–Cys102, and Cys104–Cys109. N-linked (GlcNAc...) asparagine glycosylation is found at Asn42 and Asn65. A helical transmembrane segment spans residues 138-158; that stretch reads VLAYSLLPIGGLSLIVLLAFW. Topologically, residues 159–512 are cytoplasmic; the sequence is MYRHRKPPYG…VDLPPKESSI (354 aa). Positions 190–480 constitute a Protein kinase domain; that stretch reads LQLLEIKARG…AGCVEERVSL (291 aa). ATP-binding positions include 196–204 and Lys217; that span reads KARGRFGCV. The Proton acceptor role is filled by Asp321. The interval 491–512 is interaction with DYNLT1; the sequence is DCLVSLVTSVTNVDLPPKESSI.

This sequence belongs to the protein kinase superfamily. TKL Ser/Thr protein kinase family. TGFB receptor subfamily. In terms of assembly, forms an activin receptor complex with activin type II receptors such as ACVR1B. Interacts with VPS39. Interacts with DYNLT1. Interacts with BMP3. Interacts with BMP2. Interacts with BMP6. Mg(2+) serves as cofactor. Requires Mn(2+) as cofactor. Post-translationally, phosphorylated. Constitutive phosphorylation is in part catalyzed by its own kinase activity.

It is found in the cell membrane. The catalysed reaction is L-threonyl-[receptor-protein] + ATP = O-phospho-L-threonyl-[receptor-protein] + ADP + H(+). The enzyme catalyses L-seryl-[receptor-protein] + ATP = O-phospho-L-seryl-[receptor-protein] + ADP + H(+). Transmembrane serine/threonine kinase activin type-2 receptor forming an activin receptor complex with activin type-1 serine/threonine kinase receptors (ACVR1, ACVR1B or ACVR1c). Transduces the activin signal from the cell surface to the cytoplasm and is thus regulating many physiological and pathological processes including neuronal differentiation and neuronal survival, hair follicle development and cycling, FSH production by the pituitary gland, wound healing, extracellular matrix production, immunosuppression and carcinogenesis. Activin is also thought to have a paracrine or autocrine role in follicular development in the ovary. Within the receptor complex, the type-2 receptors act as a primary activin receptors (binds activin-A/INHBA, activin-B/INHBB as well as inhibin-A/INHA-INHBA). The type-1 receptors like ACVR1B act as downstream transducers of activin signals. Activin binds to type-2 receptor at the plasma membrane and activates its serine-threonine kinase. The activated receptor type-2 then phosphorylates and activates the type-1 receptor. Once activated, the type-1 receptor binds and phosphorylates the SMAD proteins SMAD2 and SMAD3, on serine residues of the C-terminal tail. Soon after their association with the activin receptor and subsequent phosphorylation, SMAD2 and SMAD3 are released into the cytoplasm where they interact with the common partner SMAD4. This SMAD complex translocates into the nucleus where it mediates activin-induced transcription. Inhibitory SMAD7, which is recruited to ACVR1B through FKBP1A, can prevent the association of SMAD2 and SMAD3 with the activin receptor complex, thereby blocking the activin signal. Activin signal transduction is also antagonized by the binding to the receptor of inhibin-B via the IGSF1 inhibin coreceptor. The chain is Activin receptor type-2B (ACVR2B) from Homo sapiens (Human).